A 1038-amino-acid chain; its full sequence is MSHSIPITSSPPPALKKLKLPNGSEEPSEFERELLDITQAVHDSTDQTWDRPPLPSSFEDISFQQLDAEEYHDRGNTYARFFGITQEGHSVLCNVTGFIHYFYCPVPKGFEENLTEFTNYLKATFDGIERVEITSKESIWGYSNNIKTPFFKIFAKNNISKIRSAFQNGQVHNIDPCITYDNINYLLRLMIDCKITGMSWITLPRDKYKIVNNKISTCQIECSIDYRDLISHPPEGEWLKMAPLRILSFDIECAGRKGVFPEAEHDPVIQIANVVQKSGESKPFVRNVFTVNTCSSIIGSQIFEHQREEDMLMHWKEFITKVDPDVIIGYNTANFDIPYVLNRAKALGLNDFPFFGRLKRVKQEIKDAVFSSRAYGTRENKVVNIDGRMQLDLLQFIQREYKLRSYTLNSVSAHFLGEQKEDVQHSIITDLQNGTKETRRRLAVYCLKDAFLPLRLLDKLMCLVNYTEMARVTGVPFSYLLSRGQQIKVISQLFRKCLQEDIVIPNLKSEGSNEEYEGATVIEPERGYYDVPIATLDFSSLYPSIMMAHNLCYTTLLNKNSIKAFGLTEDDYTKTPNGDYFVHSNLRKGILPTILDELLTARKKAKADLKKETDPFKKDVLNGRQLALKISANSVYGFTGATVGKLPCLAISSSVTAFGREMIEKTKNEVQEYYSKKNGHPYDAKVIYGDTDSVMVKFGYQDLETCMKLGEEAANYVSTKFKNPIKLEFEKVYFPYLLINKKRYAGLYWTRPEKFDKMDTKGIETVRRDNCRLVQNVITKVLEFILEERDVPKAQRFVKQTIADLLQNRIDLSQLVITKAYSKHDYSAKQAHVELAERMRKRDPGSAPTLGDRVAYVIIKTGGDKNYEKSEDPLYVLENSLPIDVKYYLDQQLTKPLERIFIPILGETKTKELLTGSHTRTIKVAAPKTGGLLRFAKKSEVCVSCRTPLKKDNLGALCPNCIKDGKGPDLYGNALSQMNYLENKFSRLWTECQRCQGSLHQEVLCSNKDCPIFYMRTKAQKDVHQQALELVKWDNTNW.

The segment at 1–29 is disordered; sequence MSHSIPITSSPPPALKKLKLPNGSEEPSE. Zn(2+) contacts are provided by cysteine 942, cysteine 945, cysteine 958, and cysteine 961. The segment at 942-961 adopts a CysA-type zinc-finger fold; it reads CVSCRTPLKKDNLGALCPNC. The [4Fe-4S] cluster site is built by cysteine 992, cysteine 995, cysteine 1005, and cysteine 1010. Residues 992–1010 carry the CysB motif motif; sequence CQRCQGSLHQEVLCSNKDC.

It belongs to the DNA polymerase type-B family. As to quaternary structure, heterodimer with subunits of 125 kDa and 50 kDa. The 125 kDa subunit contains the polymerase active site and most likely the active site for the 3'-5' exonuclease activity. Requires [4Fe-4S] cluster as cofactor.

It localises to the nucleus. The enzyme catalyses DNA(n) + a 2'-deoxyribonucleoside 5'-triphosphate = DNA(n+1) + diphosphate. This polymerase possesses two enzymatic activities: DNA synthesis (polymerase) and an exonucleolytic activity that degrades single-stranded DNA in the 3'- to 5'-direction. In Candida albicans (Yeast), this protein is DNA polymerase delta catalytic subunit (POL3).